The chain runs to 835 residues: Cell division control protein 48 (835 aa).

The interval 1–21 (MGEEHKPLLDASGVDPREEDK) is disordered. 257–263 (PGTGKTL) is an ATP binding site. Glycyl lysine isopeptide (Lys-Gly) (interchain with G-Cter in ubiquitin) cross-links involve residues Lys-305, Lys-322, and Lys-346. Residues Asn-358 and His-394 each contribute to the ATP site. Ser-472 and Ser-519 each carry phosphoserine. Residue Lys-522 forms a Glycyl lysine isopeptide (Lys-Gly) (interchain with G-Cter in ubiquitin) linkage. 531–536 (GTGKTL) provides a ligand contact to ATP. Residues Lys-539, Lys-594, and Lys-673 each participate in a glycyl lysine isopeptide (Lys-Gly) (interchain with G-Cter in ubiquitin) cross-link. The span at 720–729 (EAEKEVKVEG) shows a compositional bias: basic and acidic residues. A disordered region spans residues 720–746 (EAEKEVKVEGEDVEMTDEGAKAEQEPE). Thr-735 is modified (phosphothreonine). Ser-770 carries the post-translational modification Phosphoserine. The disordered stretch occupies residues 792–835 (SNFNFNDAPLGTTATDNANSNNSAPSGAGAAFGSNAEEDDDLYS). The segment covering 802-826 (GTTATDNANSNNSAPSGAGAAFGSN) has biased composition (low complexity).

It belongs to the AAA ATPase family. Component of the heterotrimeric CDC48-NPL4-UFD1 ATPase complex. The CDC48-NPL4-UFD1 ATPase complex interacts with the HRD1 ubiquitin ligase complex composed of the E3 ligase HRD1, its cofactors HRD3, USA1 and DER1, substrate recruiting factor YOS9 and CDC48-binding protein UBX2. Interaction between the complexes is mediated by interaction between CDC48-NPL4-UFD1 complex member CDC48 and HRD1 complex member UBX2. Forms a complex composed of CDC48, NPL4, UFD1, UFD2 and SHP1. Forms a complex composed of CDC48, NPL4, UFD1, DOA1, SHP1 and deubiquitinase OTU1; within the complex interacts with DOA1/UFD3 and OTU1 to prevent multiubiquitination of substrates. Interacts with UFD2, to add further ubiquitin moieties; the interaction with UFD2 is prevented by DOA1/UFD3. Forms a complex composed of CDC48, DOA1, deubiquitinase UBP3 and probably BRE5; within the complex interacts with DOA1 and UBP3. Interacts (via C-terminus) with DOA1 (via PUL domain); the interaction is direct. Interacts with NPL4. Interacts with SHP1/UBX1, UBX2, UBX3, UBX4, UBX5, UBX6 and UBX7. Interacts with VMS1; the interaction recruits CDC48 to the mitochondria in response to mitochondrial stress. Component of the ribosome quality control complex (RQC), composed of the E3 ubiquitin ligase RKR1/LTN1, RQC1 and RQC2, as well as CDC48 and its ubiquitin-binding cofactors. RQC forms a stable complex with 60S ribosomal subunits. Interacts with ASE1 and CDC5; the interaction is likely to result in their degradation. Component of the DSCc E3 ligase complexes composed of at least TUL1, DSC2, DSC3, UBX3, CDC48 as well as VLD1 for the vacuole-localized complex or GLD1 for the Golgi/endosome-localized complex.

The protein resides in the microsome. Its subcellular location is the endoplasmic reticulum. The protein localises to the cytoplasm. It catalyses the reaction ATP + H2O = ADP + phosphate + H(+). The first ATP-binding region has low ATPase activity. The second ATP-binding region is responsible for ATPase activity. ATP binding to the first ATP-binding region induces intrinsic activity of the second ATP-binding region. While ATP binding to the first ATP-binding region appears to prevent ATP hydrolysis by the second ATP-binding region, ADP-binding to first region promotes the coordinate and cooperative ATPase cycle of the second ATP-binding region. ATP binding to the first ATP-binding region induces a conformational change, promoting the rotation of the first ATP-binding region relative to the second ATP-binding region in the hexamer. ATP-dependent chaperone which probably uses the energy provided by ATP hydrolysis to generate mechanical force to unfold substrate proteins, disassemble protein complexes, and disaggregate protein aggregates. By recruiting and promoting the degradation of ubiquitinated proteins, plays a role in the ubiquitin fusion degradation (UFD) pathway. Has a role in the endoplasmic reticulum-associated degradation (ERAD) pathway which mediates the cytoplasmic elimination of misfolded proteins exported from the ER. Required for the proteasome-dependent processing/activation of MGA2 and SPT23 transcription factors leading to the subsequent expression of OLE1. Has an additional role in the turnover of OLE1 where it targets ubiquitinated OLE1 and other proteins to the ERAD. Regulates ubiquitin-mediated mitochondria protein degradation. Involved in spindle disassembly probably by promoting the degradation of spindle assembly factors ASE1 and CDC5 at the end of mitosis. Component of the ribosome quality control complex (RQC), a ribosome-associated complex that mediates ubiquitination and extraction of incompletely synthesized nascent chains for proteasomal degradation. CDC48 may provide the mechanical force that dislodges the polyubiquitinated nascent peptides from the exit channel. Required for ribophagy, a process which relocalizes ribosomal particles into the vacuole for degradation in response to starvation. Component of the DSC E3 ubiquitin ligase complexes that tag proteins present in Golgi, endosome and vacuole membranes and function in protein homeostasis under non-stress conditions and support a role in protein quality control. Substrate initially binds through the attached polyubiquitin chain to UDF1/NPL4 and then moves through the pore of the ATPase rings and is thereby unfolded. Acts on a broad range of even well-folded proteins via ubiquitin-binding and unfolding to initiate substrate processing. Involved in degradation of mislocalized tail-anchored transmembrane proteins extracted from the mitochondrion outer membrane by MSP1 and ubiquitinated by DOA10. The protein is Cell division control protein 48 of Saccharomyces cerevisiae (strain ATCC 204508 / S288c) (Baker's yeast).